Consider the following 322-residue polypeptide: Probable heme-iron transport system permease protein IsdF (322 aa).

9 helical membrane passes run 9 to 29 (LLFL…FVTG), 61 to 81 (ILIA…LQAA), 89 to 109 (ANII…MLFI), 114 to 134 (FYLP…IIVL), 143 to 163 (VSMI…LEIL), 179 to 199 (IWSD…LTLL), 233 to 253 (VFLA…GIIV), 267 to 287 (VLIP…DLLG), and 294 to 314 (LEIP…IYLI).

Belongs to the binding-protein-dependent transport system permease family. FecCD subfamily.

It is found in the cell membrane. In terms of biological role, part of the binding-protein-dependent transport system for heme-iron. Responsible for the translocation of the substrate across the membrane. The chain is Probable heme-iron transport system permease protein IsdF (isdF) from Staphylococcus aureus (strain bovine RF122 / ET3-1).